The primary structure comprises 103 residues: NAD(P)H-quinone oxidoreductase subunit 4L (103 aa).

3 helical membrane-spanning segments follow: residues 5–25 (LQYC…GLIT), 32–52 (VLMS…GFSN), and 66–86 (IFVI…VLAI).

The protein belongs to the complex I subunit 4L family. NDH-1 can be composed of about 15 different subunits; different subcomplexes with different compositions have been identified which probably have different functions.

The protein localises to the cellular thylakoid membrane. It carries out the reaction a plastoquinone + NADH + (n+1) H(+)(in) = a plastoquinol + NAD(+) + n H(+)(out). The enzyme catalyses a plastoquinone + NADPH + (n+1) H(+)(in) = a plastoquinol + NADP(+) + n H(+)(out). NDH-1 shuttles electrons from an unknown electron donor, via FMN and iron-sulfur (Fe-S) centers, to quinones in the respiratory and/or the photosynthetic chain. The immediate electron acceptor for the enzyme in this species is believed to be plastoquinone. Couples the redox reaction to proton translocation, and thus conserves the redox energy in a proton gradient. Cyanobacterial NDH-1 also plays a role in inorganic carbon-concentration. The chain is NAD(P)H-quinone oxidoreductase subunit 4L from Synechocystis sp. (strain ATCC 27184 / PCC 6803 / Kazusa).